Reading from the N-terminus, the 325-residue chain is Small ribosomal subunit protein uS4m (325 aa).

Residues 146 to 209 (KRIDMILLRS…HKQNLIHRLK (64 aa)) enclose the S4 RNA-binding domain.

The protein belongs to the universal ribosomal protein uS4 family.

Its subcellular location is the mitochondrion. The chain is Small ribosomal subunit protein uS4m (mrps4) from Dictyostelium citrinum (Slime mold).